Reading from the N-terminus, the 192-residue chain is Shikimate kinase (192 aa).

27 to 32 (GTGKTT) provides a ligand contact to ATP. Threonine 31 contributes to the Mg(2+) binding site. 3 residues coordinate substrate: aspartate 49, arginine 73, and glycine 95. Arginine 133 serves as a coordination point for ATP. Position 152 (arginine 152) interacts with substrate.

It belongs to the shikimate kinase family. In terms of assembly, monomer. It depends on Mg(2+) as a cofactor.

Its subcellular location is the cytoplasm. It catalyses the reaction shikimate + ATP = 3-phosphoshikimate + ADP + H(+). Its pathway is metabolic intermediate biosynthesis; chorismate biosynthesis; chorismate from D-erythrose 4-phosphate and phosphoenolpyruvate: step 5/7. Functionally, catalyzes the specific phosphorylation of the 3-hydroxyl group of shikimic acid using ATP as a cosubstrate. The sequence is that of Shikimate kinase from Hahella chejuensis (strain KCTC 2396).